Here is a 268-residue protein sequence, read N- to C-terminus: Cell division coordinator CpoB (268 aa).

A signal peptide spans 1–21 (MRMCRRVVTVLALSLPLAAWA). Positions 58–94 (QLFMQLQQMQDQLSRQQGIIEELQNDVSRMKQENLER) form a coiled coil. Residues 104-146 (SGAAPAATPDNSSGGGASNAAPDAAAGAAAQQPAGSSQPGDPA) form a disordered region. Residues 121-143 (SNAAPDAAAGAAAQQPAGSSQPG) are compositionally biased toward low complexity. TPR repeat units lie at residues 149–181 (KLYYDAAFDLIKQKDFDKASQAFNAFLRKYPNS), 185–218 (GNAQYWLGEVNLAKGDLQGASQAFAQVSQKYPKH), and 222–255 (PDSLYKLADVERRMGHTDKVKGILQQVVTQYPGT).

This sequence belongs to the CpoB family.

The protein localises to the periplasm. Functionally, mediates coordination of peptidoglycan synthesis and outer membrane constriction during cell division. This Pseudomonas putida (strain ATCC 47054 / DSM 6125 / CFBP 8728 / NCIMB 11950 / KT2440) protein is Cell division coordinator CpoB.